The primary structure comprises 323 residues: Breast cancer metastasis-suppressor 1-like protein (323 aa).

The segment covering 1 to 17 (MPVHSRGDKKETNHHDE) has biased composition (basic and acidic residues). A disordered region spans residues 1–56 (MPVHSRGDKKETNHHDEMEVDYAENEGSSSEDEDTESSSVSEDGDSSEMDDEDCER). Acidic residues predominate over residues 18 to 53 (MEVDYAENEGSSSEDEDTESSSVSEDGDSSEMDDED). Coiled-coil stretches lie at residues 52 to 84 (EDCE…KERL) and 149 to 180 (EKLL…ITSE). S197 is subject to Phosphoserine. Glycyl lysine isopeptide (Lys-Gly) (interchain with G-Cter in SUMO2) cross-links involve residues K240 and K246.

Belongs to the BRMS1 family. In terms of assembly, component of the Sin3/HDAC1 corepressor complex at least composed of BRMS1, BRMS1L and ING2/ING1L. Interacts with HDAC and SIN3A.

The protein localises to the nucleus. Its function is as follows. Involved in the histone deacetylase (HDAC1)-dependent transcriptional repression activity. When overexpressed in lung cancer cell line that lacks p53/TP53 expression, inhibits cell growth. The chain is Breast cancer metastasis-suppressor 1-like protein (BRMS1L) from Bos taurus (Bovine).